Consider the following 67-residue polypeptide: Large ribosomal subunit protein bL35 (67 aa).

The segment covering 1–11 (MPKLKTRKAAA) has biased composition (basic residues). Residues 1 to 22 (MPKLKTRKAAAKRFEATGSGKK) are disordered.

It belongs to the bacterial ribosomal protein bL35 family.

The protein is Large ribosomal subunit protein bL35 of Microcystis aeruginosa (strain NIES-843 / IAM M-2473).